We begin with the raw amino-acid sequence, 130 residues long: Fluoride-specific ion channel FluC 2 (130 aa).

4 helical membrane-spanning segments follow: residues 4-24 (GLST…GAIC), 38-58 (NLWG…FFLA), 72-92 (LYLL…SLIL), and 103-123 (WMEL…FISL). Residues Gly-82 and Ser-85 each contribute to the Na(+) site.

Belongs to the fluoride channel Fluc/FEX (TC 1.A.43) family.

It is found in the cell inner membrane. The enzyme catalyses fluoride(in) = fluoride(out). Its activity is regulated as follows. Na(+) is not transported, but it plays an essential structural role and its presence is essential for fluoride channel function. Its function is as follows. Fluoride-specific ion channel. Important for reducing fluoride concentration in the cell, thus reducing its toxicity. The chain is Fluoride-specific ion channel FluC 2 from Prochlorococcus marinus (strain SARG / CCMP1375 / SS120).